Here is a 555-residue protein sequence, read N- to C-terminus: Hydrogenase-4 component G (555 aa).

The protein belongs to the complex I 49 kDa subunit family. The cofactor is [4Fe-4S] cluster.

Its function is as follows. Possible component of hydrogenase 4. This chain is Hydrogenase-4 component G, found in Escherichia coli (strain K12).